We begin with the raw amino-acid sequence, 263 residues long: Diphthine synthase (263 aa).

S-adenosyl-L-methionine contacts are provided by residues Leu11, Asp89, Ala92, 117–118 (SV), Leu166, and Leu208.

The protein belongs to the diphthine synthase family. In terms of assembly, homodimer.

The enzyme catalyses 2-[(3S)-amino-3-carboxypropyl]-L-histidyl-[translation elongation factor 2] + 3 S-adenosyl-L-methionine = diphthine-[translation elongation factor 2] + 3 S-adenosyl-L-homocysteine + 3 H(+). The protein operates within protein modification; peptidyl-diphthamide biosynthesis. In terms of biological role, S-adenosyl-L-methionine-dependent methyltransferase that catalyzes the trimethylation of the amino group of the modified target histidine residue in translation elongation factor 2 (EF-2), to form an intermediate called diphthine. The three successive methylation reactions represent the second step of diphthamide biosynthesis. The chain is Diphthine synthase from Methanopyrus kandleri (strain AV19 / DSM 6324 / JCM 9639 / NBRC 100938).